The sequence spans 269 residues: Thiazole synthase (269 aa).

Residue Lys-112 is the Schiff-base intermediate with DXP of the active site. 1-deoxy-D-xylulose 5-phosphate-binding positions include Gly-173, 199–200 (AG), and 221–222 (NT).

This sequence belongs to the ThiG family. As to quaternary structure, homotetramer. Forms heterodimers with either ThiH or ThiS.

The protein localises to the cytoplasm. The catalysed reaction is [ThiS sulfur-carrier protein]-C-terminal-Gly-aminoethanethioate + 2-iminoacetate + 1-deoxy-D-xylulose 5-phosphate = [ThiS sulfur-carrier protein]-C-terminal Gly-Gly + 2-[(2R,5Z)-2-carboxy-4-methylthiazol-5(2H)-ylidene]ethyl phosphate + 2 H2O + H(+). Its pathway is cofactor biosynthesis; thiamine diphosphate biosynthesis. Functionally, catalyzes the rearrangement of 1-deoxy-D-xylulose 5-phosphate (DXP) to produce the thiazole phosphate moiety of thiamine. Sulfur is provided by the thiocarboxylate moiety of the carrier protein ThiS. In vitro, sulfur can be provided by H(2)S. The sequence is that of Thiazole synthase from Caulobacter vibrioides (strain ATCC 19089 / CIP 103742 / CB 15) (Caulobacter crescentus).